Reading from the N-terminus, the 312-residue chain is MADDNFTVVTEFILLGLTDHAELKAVLFVVFLVIYAITLLRNLGMILLIQITSKLHTPMYFLLSCLSFVDACYSSAIAPKMLVNLLVVKATISFSACMVQHLCFGVFITTEGFLLSVMAYDRYVAIVSPLLYTVAMSDRKCVELVTGSWIGGIVNTLIHTISLRRLSFCRLNAVSHFFCDIPSLLKLSCSDTSMNELLLLTFSGVIAMATFLTVIISYIFIAFASLRIHSASGRQQAFSTCASHLTAVTIFYGTLIFSYIQPSSQYFVEQEKVVSMFYTLGIPMLNLLIHSLRNKDVKEAVKRAIEMKHFLC.

The Extracellular portion of the chain corresponds to 1 to 25 (MADDNFTVVTEFILLGLTDHAELKA). N5 carries an N-linked (GlcNAc...) asparagine glycan. Residues 26–46 (VLFVVFLVIYAITLLRNLGMI) form a helical membrane-spanning segment. The Cytoplasmic portion of the chain corresponds to 47–54 (LLIQITSK). A helical membrane pass occupies residues 55–75 (LHTPMYFLLSCLSFVDACYSS). At 76-99 (AIAPKMLVNLLVVKATISFSACMV) the chain is on the extracellular side. The cysteines at positions 97 and 189 are disulfide-linked. A helical membrane pass occupies residues 100 to 120 (QHLCFGVFITTEGFLLSVMAY). The Cytoplasmic portion of the chain corresponds to 121–139 (DRYVAIVSPLLYTVAMSDR). The chain crosses the membrane as a helical span at residues 140-160 (KCVELVTGSWIGGIVNTLIHT). At 161 to 196 (ISLRRLSFCRLNAVSHFFCDIPSLLKLSCSDTSMNE) the chain is on the extracellular side. A helical transmembrane segment spans residues 197 to 217 (LLLLTFSGVIAMATFLTVIIS). The Cytoplasmic segment spans residues 218-237 (YIFIAFASLRIHSASGRQQA). Residues 238 to 258 (FSTCASHLTAVTIFYGTLIFS) form a helical membrane-spanning segment. Over 259–271 (YIQPSSQYFVEQE) the chain is Extracellular. A helical membrane pass occupies residues 272–292 (KVVSMFYTLGIPMLNLLIHSL). Topologically, residues 293–312 (RNKDVKEAVKRAIEMKHFLC) are cytoplasmic.

It belongs to the G-protein coupled receptor 1 family.

The protein resides in the cell membrane. Functionally, odorant receptor. The chain is Olfactory receptor 5J2 (OR5J2) from Homo sapiens (Human).